A 150-amino-acid polypeptide reads, in one-letter code: Phosphoribosyl-AMP cyclohydrolase (150 aa).

Residue D93 participates in Mg(2+) binding. C94 contacts Zn(2+). Residues D95 and D97 each coordinate Mg(2+). 2 residues coordinate Zn(2+): C112 and C119.

The protein belongs to the PRA-CH family. Homodimer. It depends on Mg(2+) as a cofactor. The cofactor is Zn(2+).

It localises to the cytoplasm. It carries out the reaction 1-(5-phospho-beta-D-ribosyl)-5'-AMP + H2O = 1-(5-phospho-beta-D-ribosyl)-5-[(5-phospho-beta-D-ribosylamino)methylideneamino]imidazole-4-carboxamide. The protein operates within amino-acid biosynthesis; L-histidine biosynthesis; L-histidine from 5-phospho-alpha-D-ribose 1-diphosphate: step 3/9. Its function is as follows. Catalyzes the hydrolysis of the adenine ring of phosphoribosyl-AMP. The protein is Phosphoribosyl-AMP cyclohydrolase of Rhizobium etli (strain ATCC 51251 / DSM 11541 / JCM 21823 / NBRC 15573 / CFN 42).